A 384-amino-acid chain; its full sequence is Prokineticin receptor 2 (384 aa).

The Extracellular segment spans residues M1–K53. Residues N7, N13, and N27 are each glycosylated (N-linked (GlcNAc...) asparagine). Residues I54 to F74 form a helical membrane-spanning segment. The Cytoplasmic segment spans residues I75–N89. Residues L90–E110 traverse the membrane as a helical segment. Residues M111–V137 are Extracellular-facing. A disulfide bond links C128 and C208. Residues S138 to V158 form a helical membrane-spanning segment. Residues H159 to S171 lie on the Cytoplasmic side of the membrane. The chain crosses the membrane as a helical span at residues F172–T192. Residues K193–Y223 lie on the Extracellular side of the membrane. A helical membrane pass occupies residues F224 to A244. At R245–T273 the chain is on the cytoplasmic side. A helical membrane pass occupies residues V274–F294. Topologically, residues T295–T313 are extracellular. The helical transmembrane segment at A314–V334 threads the bilayer. Over T335–K384 the chain is Cytoplasmic.

Belongs to the G-protein coupled receptor 1 family. Homodimer.

The protein resides in the cell membrane. Functionally, receptor for prokineticin 2. Exclusively coupled to the G(q) subclass of heteromeric G proteins. Activation leads to mobilization of calcium, stimulation of phosphoinositide turnover and activation of p44/p42 mitogen-activated protein kinase. The protein is Prokineticin receptor 2 (PROKR2) of Bos taurus (Bovine).